Consider the following 198-residue polypeptide: Carnitine operon protein CaiE (198 aa).

Residues 179–198 (VEENRPRLKGTTDVKPKSAQ) are disordered. Basic and acidic residues predominate over residues 180–198 (EENRPRLKGTTDVKPKSAQ).

This sequence belongs to the transferase hexapeptide repeat family.

It functions in the pathway amine and polyamine metabolism; carnitine metabolism. In terms of biological role, overproduction of CaiE stimulates the activity of CaiB and CaiD. This is Carnitine operon protein CaiE from Salmonella agona (strain SL483).